The following is a 151-amino-acid chain: Large ribosomal subunit protein uL15 (151 aa).

Residues 1–60 (MAENNPLKIHNLRPAPGAKTAKTRVGRGEASKGKTAGRGTKGTKARYQVPERFEGGQMPL) form a disordered region.

It belongs to the universal ribosomal protein uL15 family. In terms of assembly, part of the 50S ribosomal subunit.

Binds to the 23S rRNA. The protein is Large ribosomal subunit protein uL15 of Streptomyces avermitilis (strain ATCC 31267 / DSM 46492 / JCM 5070 / NBRC 14893 / NCIMB 12804 / NRRL 8165 / MA-4680).